Reading from the N-terminus, the 1069-residue chain is Rab GTPase-activating protein 1 (1069 aa).

Residues 1-79 (MDDKASVGKI…DPPMDDQPGE (79 aa)) form a disordered region. Positions 7–22 (VGKISVSSDSVSTLNS) are enriched in low complexity. Ser42 is subject to Phosphoserine. Positions 142-298 (EDSVVFSKLT…IFTFSVSLEI (157 aa)) constitute a PID domain. Position 360 is a phosphoserine (Ser360). Residues 482–527 (ERERRKTTASPSVRLPQSGSQSSVIPSPPEDDEEEDNDEPLLSGSG) form a disordered region. Polar residues predominate over residues 489–506 (TASPSVRLPQSGSQSSVI). Positions 510–520 (PEDDEEEDNDE) are enriched in acidic residues. The Rab-GAP TBC domain maps to 566–752 (GVPEALRGEV…HIIDLLLCEG (187 aa)). Residues 798-1047 (KKLMELACNM…ALNEVQAAKK (250 aa)) adopt a coiled-coil conformation. Thr996 carries the post-translational modification Phosphothreonine.

As to quaternary structure, interacts with RAB6A and tubulin gamma.

It localises to the cytoplasm. The protein resides in the cytosol. It is found in the cytoskeleton. Its subcellular location is the microtubule organizing center. The protein localises to the centrosome. In terms of biological role, may act as a GTPase-activating protein of RAB6A. May play a role in microtubule nucleation by centrosome. May participate in a RAB6A-mediated pathway involved in the metaphase-anaphase transition. The chain is Rab GTPase-activating protein 1 from Pongo abelii (Sumatran orangutan).